Consider the following 188-residue polypeptide: MPKASEIKKNQAVEYEGRVYFVKDIERSVPQGRAGGSLYRMRMYDVVTNQKLDETFKDSDMLNLADLVRREATFSYADGDEYVFMDTEDFTQYMLNRSAIEDELLFITEDTQGVMVILVSENPVAIDLPPTVELTIEETDPSIKGGSATARTKPARLTTGLVVQVPEHISTGDRIRVNVEERKFLSRA.

The protein belongs to the elongation factor P family.

The protein is Elongation factor P-like protein of Marinobacter nauticus (strain ATCC 700491 / DSM 11845 / VT8) (Marinobacter aquaeolei).